Reading from the N-terminus, the 330-residue chain is Diacylglycerol kinase (330 aa).

A DAGKc domain is found at 1-132 (MRKCARIIYN…VDIGKMNNRY (132 aa)). ATP is bound by residues 10 to 14 (NPTSG), Thr41, 67 to 73 (GDGTLNE), and Thr94. Mg(2+) contacts are provided by Lys213, Asp216, and His218. Glu273 serves as the catalytic Proton acceptor.

It belongs to the diacylglycerol/lipid kinase family. In terms of assembly, homodimer. It depends on Mg(2+) as a cofactor.

The enzyme catalyses a 1,2-diacyl-sn-glycerol + ATP = a 1,2-diacyl-sn-glycero-3-phosphate + ADP + H(+). Its function is as follows. Catalyzes the phosphorylation of diacylglycerol (DAG) into phosphatidic acid. Is a key enzyme involved in the production of lipoteichoic acid by reintroducing DAG formed from the breakdown of membrane phospholipids into the phosphatidylglycerol biosynthetic pathway. This chain is Diacylglycerol kinase (dagK), found in Staphylococcus haemolyticus (strain JCSC1435).